The sequence spans 207 residues: Proteasome subunit beta 1 (207 aa).

The propeptide at 1–9 (MWALDKIKG) is removed in mature form; by autocatalysis. The Nucleophile role is filled by T10.

Belongs to the peptidase T1B family. The 20S proteasome core is composed of 14 alpha and 14 beta subunits that assemble into four stacked heptameric rings, resulting in a barrel-shaped structure. The two inner rings, each composed of seven catalytic beta subunits, are sandwiched by two outer rings, each composed of seven alpha subunits. The catalytic chamber with the active sites is on the inside of the barrel. Has a gated structure, the ends of the cylinder being occluded by the N-termini of the alpha-subunits. Is capped at one or both ends by the proteasome regulatory ATPase, PAN.

The protein resides in the cytoplasm. It carries out the reaction Cleavage of peptide bonds with very broad specificity.. The formation of the proteasomal ATPase PAN-20S proteasome complex, via the docking of the C-termini of PAN into the intersubunit pockets in the alpha-rings, triggers opening of the gate for substrate entry. Interconversion between the open-gate and close-gate conformations leads to a dynamic regulation of the 20S proteasome proteolysis activity. Functionally, component of the proteasome core, a large protease complex with broad specificity involved in protein degradation. The polypeptide is Proteasome subunit beta 1 (Thermococcus sibiricus (strain DSM 12597 / MM 739)).